A 496-amino-acid polypeptide reads, in one-letter code: Acetyl-coenzyme A carboxylase carboxyl transferase subunit beta, chloroplastic (496 aa).

One can recognise a CoA carboxyltransferase N-terminal domain in the interval 229–496; that stretch reads LWVQCENCYG…FFPLNKNFIK (268 aa). Positions 233, 236, 252, and 255 each coordinate Zn(2+). The C4-type zinc-finger motif lies at 233-255; that stretch reads CENCYGLNYKKFFRLKLHICEQC.

This sequence belongs to the AccD/PCCB family. As to quaternary structure, acetyl-CoA carboxylase is a heterohexamer composed of biotin carboxyl carrier protein, biotin carboxylase and 2 subunits each of ACCase subunit alpha and ACCase plastid-coded subunit beta (accD). Zn(2+) serves as cofactor.

It localises to the plastid. It is found in the chloroplast stroma. The enzyme catalyses N(6)-carboxybiotinyl-L-lysyl-[protein] + acetyl-CoA = N(6)-biotinyl-L-lysyl-[protein] + malonyl-CoA. It participates in lipid metabolism; malonyl-CoA biosynthesis; malonyl-CoA from acetyl-CoA: step 1/1. Functionally, component of the acetyl coenzyme A carboxylase (ACC) complex. Biotin carboxylase (BC) catalyzes the carboxylation of biotin on its carrier protein (BCCP) and then the CO(2) group is transferred by the transcarboxylase to acetyl-CoA to form malonyl-CoA. The protein is Acetyl-coenzyme A carboxylase carboxyl transferase subunit beta, chloroplastic of Ranunculus macranthus (Large buttercup).